Consider the following 471-residue polypeptide: Kynurenine 3-monooxygenase (471 aa).

FAD-binding positions include Val19, 37-40 (YESR), and Ala57. L-kynurenine-binding residues include Arg85 and Tyr99. Residues Arg111, Leu136, Thr172, Asp304, and 317–318 (MN) each bind FAD. L-kynurenine contacts are provided by Asn363 and Tyr398. A run of 2 helical transmembrane segments spans residues 385 to 404 (CLHTLMPSTFIPLYTMVTFS) and 425 to 445 (ALFFFGTLVALSTTYLLTGPT).

The protein belongs to the aromatic-ring hydroxylase family. KMO subfamily. FAD serves as cofactor.

The protein resides in the mitochondrion outer membrane. It catalyses the reaction L-kynurenine + NADPH + O2 + H(+) = 3-hydroxy-L-kynurenine + NADP(+) + H2O. Its pathway is cofactor biosynthesis; NAD(+) biosynthesis; quinolinate from L-kynurenine: step 1/3. In terms of biological role, catalyzes the hydroxylation of L-kynurenine (L-Kyn) to form 3-hydroxy-L-kynurenine (L-3OHKyn). Required for synthesis of quinolinic acid, a neurotoxic NMDA receptor antagonist and potential endogenous inhibitor of NMDA receptor signaling in axonal targeting, synaptogenesis and apoptosis during brain development. Quinolinic acid may also affect NMDA receptor signaling in pancreatic beta cells, osteoblasts, myocardial cells, and the gastrointestinal tract. The protein is Kynurenine 3-monooxygenase of Sus scrofa (Pig).